Reading from the N-terminus, the 177-residue chain is Disulfide bond formation protein B (177 aa).

Over methionine 1–valine 14 the chain is Cytoplasmic. A helical membrane pass occupies residues tryptophan 15–tyrosine 31. Residues phenylalanine 32–leucine 49 are Periplasmic-facing. An intrachain disulfide couples cysteine 41 to cysteine 44. The helical transmembrane segment at alanine 50–proline 65 threads the bilayer. Topologically, residues arginine 66–leucine 72 are cytoplasmic. The chain crosses the membrane as a helical span at residues isoleucine 73–phenylalanine 90. The Periplasmic portion of the chain corresponds to arginine 91–glutamine 145. Cysteines 105 and 131 form a disulfide. A helical membrane pass occupies residues tryptophan 146–alanine 164. Residues glutamine 165 to asparagine 177 lie on the Cytoplasmic side of the membrane.

This sequence belongs to the DsbB family.

Its subcellular location is the cell inner membrane. Its function is as follows. Required for disulfide bond formation in some periplasmic proteins. Acts by oxidizing the DsbA protein. The polypeptide is Disulfide bond formation protein B (Haemophilus influenzae (strain ATCC 51907 / DSM 11121 / KW20 / Rd)).